The following is a 1032-amino-acid chain: MSEQIQIDTGAFQRRVNKLLSCWKDSSADFEQLNQVDSLLVVMGGQNDDLIYSKTTAIHSWLLGYEFPSTVILFTKDSVTFVTSASKAVHLEPLKRSSTGFNLEILKRSKDEASNRALWDDLVSRIDAQGSKVGCLPKDKPIGKFADEWQSVFEKAQSSKDFKMIDVSASLSAVWATKDDDEIKAIRYASKMSSAVMSGYFENEMSTILDEGKKVTHEQLSERIEGKLDDTKLWKRVKGLEGADLSLADWCYTPIVQSGGEYDLKTSAVSSTKRLQGADGNGGVVIASMGIKYRNYCSNIGRTYLIDPHNSQQKMYAFLHEIQTQLADKHLRAGATCKEIYSKAVEIVRAKDEKLVASFVKNVGFGIGLEFRDSAYVLSAKNNRALQRDMVVNLSVGFQDLDDPNHKGEVYSLLLIDTLRINDNAPATFLTDRVRGTNDMSFFFKDDEEEEEEEERRSPAKPDGKVTPGGKVLRNKNRGAAHDDTAAEKMKLHQKELAKQKQEDGLARFAGEDGEGNASNEKVFKKFESYKRENLLPTKVADLKIMVDHRAQSIILPIYGYAVPFHINTLKNVSKSDEGEYTYLRLNFVTPGQIAGKKEDVPFDDPDATFVRSMSYRSSDSSRFTELFREITELRKSATKREAEEKELADVVEQDKLILTKSRAYTLPEVFPRPAMEGKRVPGDLTIHQNGLRFSSPLRPDQKIDLLFSNMKHLFFQPCDKELIVIVHIHLKSPIMIGKRKAKDIQFYREASDVQFDETGNRKRKYRSGDEDEIELEQEERRRRSQLNKEFKVFAERIAEASEGRVSVDVPYRELGFNGVPFRTNVLLQPTTDCLVHLTDPPFLVITLTDVEIVHLERVQFGLQSFDMVFVFSDFSRAPMHVTSIPTTSLDDVKQWLDSVDICVTEGAVNLNWGAIMKTVNEDPYDFFAEGGWGFLQSGSDDGGSSESESGSEFGSEMDDGQEETDEDSDSGSDFGDSAEDESGSEGFEDESEEGEDWDELERKAARADEKKRRQQGGSDDDEDSGKKGKRR.

The segment at 443 to 485 is disordered; the sequence is FFKDDEEEEEEEERRSPAKPDGKVTPGGKVLRNKNRGAAHDDT. Basic and acidic residues predominate over residues 455-464; it reads ERRSPAKPDG. Coiled coils occupy residues 633–653 and 778–803; these read ELRKSATKREAEEKELADVVE and QEERRRRSQLNKEFKVFAERIAEASE. The segment at 936-1032 is disordered; sequence LQSGSDDGGS…EDSGKKGKRR (97 aa). Positions 938–955 are enriched in low complexity; the sequence is SGSDDGGSSESESGSEFG. Over residues 956 to 1000 the composition is skewed to acidic residues; it reads SEMDDGQEETDEDSDSGSDFGDSAEDESGSEGFEDESEEGEDWDE. The stretch at 996-1017 forms a coiled coil; the sequence is EDWDELERKAARADEKKRRQQG. The segment covering 1001 to 1012 has biased composition (basic and acidic residues); that stretch reads LERKAARADEKK.

The protein belongs to the peptidase M24 family. SPT16 subfamily. Forms a stable heterodimer with POB3. The SPT16-POB3 dimer weakly associates with multiple molecules of NHP6 to form the FACT complex.

It localises to the nucleus. The protein localises to the chromosome. In terms of biological role, component of the FACT complex, a general chromatin factor that acts to reorganize nucleosomes. The FACT complex is involved in multiple processes that require DNA as a template such as mRNA elongation, DNA replication and DNA repair. During transcription elongation the FACT complex acts as a histone chaperone that both destabilizes and restores nucleosomal structure. It facilitates the passage of RNA polymerase II and transcription by promoting the dissociation of one histone H2A-H2B dimer from the nucleosome, then subsequently promotes the reestablishment of the nucleosome following the passage of RNA polymerase II. The chain is FACT complex subunit SPT16 (SPT16) from Mycosarcoma maydis (Corn smut fungus).